A 1274-amino-acid polypeptide reads, in one-letter code: RNA-directed RNA polymerase VP2 (1274 aa).

Residues 561 to 798 (LSTTSGSVVT…KLYALMGCRI (238 aa)) enclose the RdRp catalytic domain.

It belongs to the reoviridae RNA-directed RNA polymerase family.

The protein resides in the virion. The catalysed reaction is RNA(n) + a ribonucleoside 5'-triphosphate = RNA(n+1) + diphosphate. In terms of biological role, RNA-directed RNA polymerase that is involved in transcription and genome replication. Following infection, it catalyzes the synthesis of fully conservative plus strands. After core assembly, which consists in recruitment of one capped plus-strand for each genomic segments and polymerase complexes, the polymerase switches mode and catalyzes the synthesis of complementary minus-strands. This Aquareovirus C (isolate Golden shiner/USA/GSRV/1977) (AQRV-C) protein is RNA-directed RNA polymerase VP2 (S2).